Consider the following 104-residue polypeptide: Putative pterin-4-alpha-carbinolamine dehydratase (104 aa).

The protein belongs to the pterin-4-alpha-carbinolamine dehydratase family.

The catalysed reaction is (4aS,6R)-4a-hydroxy-L-erythro-5,6,7,8-tetrahydrobiopterin = (6R)-L-erythro-6,7-dihydrobiopterin + H2O. The sequence is that of Putative pterin-4-alpha-carbinolamine dehydratase (pcbD) from Rhizobium meliloti (strain 1021) (Ensifer meliloti).